A 297-amino-acid chain; its full sequence is MPVALPVTLYPDEPMARHSSWRAGGTARYYAEPATPDEAIALAAWAREQQLPLIWIGRGTNLLVRDEGFDGVIASYRGQRWELIEHGETAEVWIEAGAPMAGTARRLAAMGWAGLEWAEGLPGAVGGAIVGNAGCYGGSVAEVLITADLLLNGSECVEWSVHDLAYTYRESVLKQLLHTGIPPLVLAGRFRLQRGDPAALTARMKAIAAERKQKTPAGSSCGSVFKNPAGDFAGRLIEAAGLKGVRIGDAEISTLHANYIINRGQARAADILALIDLARTKVADQFGITLQLEVRII.

One can recognise an FAD-binding PCMH-type domain in the interval 22-195; that stretch reads RAGGTARYYA…LAGRFRLQRG (174 aa). Residue R169 is part of the active site. The active-site Proton donor is the S223. E293 is a catalytic residue.

This sequence belongs to the MurB family. Requires FAD as cofactor.

It is found in the cytoplasm. It carries out the reaction UDP-N-acetyl-alpha-D-muramate + NADP(+) = UDP-N-acetyl-3-O-(1-carboxyvinyl)-alpha-D-glucosamine + NADPH + H(+). It functions in the pathway cell wall biogenesis; peptidoglycan biosynthesis. In terms of biological role, cell wall formation. In Chloroflexus aurantiacus (strain ATCC 29364 / DSM 637 / Y-400-fl), this protein is UDP-N-acetylenolpyruvoylglucosamine reductase.